The sequence spans 421 residues: Acylglycerol kinase, mitochondrial (421 aa).

Lys6 is modified (N6-acetyllysine). A hydrophobic region spans residues 15 to 31; sequence TTAGLCLLTWGGHWLYG. In terms of domain architecture, DAGKc spans 58–199; sequence AQVKKATVFL…LDVLQIKGEK (142 aa). The interval 252 to 271 is disordered; that stretch reads ISYTGPRERPPIEPEETPPR.

The protein belongs to the AGK family. As to quaternary structure, component of the TIM22 complex, which core is composed of TIMM22, associated with TIMM10 (TIMM10A and/or TIMM10B), TIMM9, AGK and TIMM29. Interacts with SMIM26. It depends on Mg(2+) as a cofactor. In terms of tissue distribution, ubiquitously expressed.

The protein resides in the mitochondrion inner membrane. The protein localises to the mitochondrion intermembrane space. The enzyme catalyses a monoacylglycerol + ATP = a monoacyl-sn-glycero-3-phosphate + ADP + H(+). It carries out the reaction a 1,2-diacyl-sn-glycerol + ATP = a 1,2-diacyl-sn-glycero-3-phosphate + ADP + H(+). It catalyses the reaction an N-acylsphing-4-enine + ATP = an N-acylsphing-4-enine 1-phosphate + ADP + H(+). The catalysed reaction is 1,2-di-(9Z-octadecenoyl)-sn-glycerol + ATP = 1,2-di-(9Z-octadecenoyl)-sn-glycero-3-phosphate + ADP + H(+). The enzyme catalyses 1-(9Z-octadecenoyl)-sn-glycerol + ATP = 1-(9Z-octadecenoyl)-sn-glycero-3-phosphate + ADP + H(+). It carries out the reaction 1-(5Z,8Z,11Z,14Z-eicosatetraenoyl)-sn-glycerol + ATP = 1-(5Z,8Z,11Z,14Z-eicosatetraenoyl)-sn-glycero-3-phosphate + ADP + H(+). It catalyses the reaction a 1-acyl-sn-glycerol + ATP = a 1-acyl-sn-glycero-3-phosphate + ADP + H(+). The catalysed reaction is 1-hexadecanoyl-sn-glycerol + ATP = 1-hexadecanoyl-sn-glycero-3-phosphate + ADP + H(+). The enzyme catalyses a 2-acylglycerol + ATP = a 2-acyl-sn-glycerol 3-phosphate + ADP + H(+). It carries out the reaction 2-(5Z,8Z,11Z,14Z-eicosatetraenoyl)-glycerol + ATP = 2-(5Z,8Z,11Z,14Z-eicosatetraenoyl)-sn-glycero-3-phosphate + ADP + H(+). It catalyses the reaction N-(hexanoyl)sphing-4-enine + ATP = N-hexanoylsphing-4-enine 1-phosphate + ADP + H(+). It participates in lipid metabolism; glycerolipid metabolism. Both the ceramide and diacylglycerol kinase activities are inhibited by sphingosine and stimulated by cardiolipin. Both activities are stimulated by calcium when magnesium concentrations are low but inhibited by calcium when magnesium concentrations are high. In terms of biological role, lipid kinase that can phosphorylate both monoacylglycerol and diacylglycerol to form lysophosphatidic acid (LPA) and phosphatidic acid (PA), respectively. Phosphorylates ceramide but not sphingosine. Phosphorylates 1,2-dioleoylglycerol more rapidly than 2,3-dioleoylglycerol. Independently of its lipid kinase activity, acts as a component of the TIM22 complex. The TIM22 complex mediates the import and insertion of multi-pass transmembrane proteins into the mitochondrial inner membrane by forming a twin-pore translocase that uses the membrane potential as the external driving force. In the TIM22 complex, required for the import of a subset of metabolite carriers into mitochondria, such as ANT1/SLC25A4 and SLC25A24, while it is not required for the import of TIMM23. Overexpression increases the formation and secretion of LPA, resulting in transactivation of EGFR and activation of the downstream MAPK signaling pathway, leading to increased cell growth. The protein is Acylglycerol kinase, mitochondrial of Mus musculus (Mouse).